The following is a 22-amino-acid chain: Large ribosomal subunit protein bL32 (22 aa).

Residues 1–22 are disordered; sequence CVPKRKVSPSXRNMRXAHDXLT.

The protein belongs to the bacterial ribosomal protein bL32 family.

The polypeptide is Large ribosomal subunit protein bL32 (rpmF) (Brevundimonas vesicularis (Pseudomonas vesicularis)).